The chain runs to 700 residues: Tectonic-2 (700 aa).

Residues 1–25 form the signal peptide; the sequence is MGSLSPLSFLWGLLLLQGVLRPLRG. Topologically, residues 26-665 are extracellular; that stretch reads DPVFIPPFIR…YYQGEPRPQC (640 aa). 5 N-linked (GlcNAc...) asparagine glycosylation sites follow: Asn-76, Asn-82, Asn-146, Asn-156, and Asn-389. Residues 666 to 682 form a helical membrane-spanning segment; it reads VAKGLMLLSLLMLAILL. Over 683-700 the chain is Cytoplasmic; that stretch reads RHPWVGMCKAWSSASIQH.

This sequence belongs to the tectonic family. Part of the tectonic-like complex (also named B9 complex).

It localises to the membrane. Its subcellular location is the cytoplasm. The protein resides in the cytoskeleton. The protein localises to the cilium basal body. Functionally, component of the tectonic-like complex, a complex localized at the transition zone of primary cilia and acting as a barrier that prevents diffusion of transmembrane proteins between the cilia and plasma membranes. Required for hedgehog signaling transduction. The chain is Tectonic-2 (Tctn2) from Rattus norvegicus (Rat).